The primary structure comprises 228 residues: METAVDKLEAMFQKAEADMEYMEKRLRLDFLTNVPENSAAEENPMKLLENLSAIKTRHAALCTQVQEIAAEQKQSMDAIRVHLDTTVQLVQQLQQTADVELPTVTETEQESAEFLGLSVNQNTIEVPMSMELPAQELPQSSREGEFEEVSEATLEAVPCSMRANVKLANLNAFYKQLHEYFSFRKNSGALSLPKMKQMNMKVSDAKLKTLQHLSLIELDMKGHVRLLL.

The protein belongs to the SKA2 family. Component of the SKA complex, composed of ska1, ska2 and ska3.

Its subcellular location is the cytoplasm. The protein resides in the cytoskeleton. The protein localises to the spindle. It localises to the chromosome. It is found in the centromere. Its subcellular location is the kinetochore. Functionally, component of the SKA complex, a microtubule plus end-binding complex of the outer kinetochore that stabilizes spindle microtubule-kinetochore attachments, promotes alignment of chromosomes at the mitotic spindle equator (chromosome congression) and assists suppression of the spindle assembly checkpoint. Kinetochores, consisting of a centromere-associated inner segment and a microtubule-contacting outer segment, play a crucial role in chromosome segregation by mediating the physical connection between centromeric DNA and spindle microtubules. The outer kinetochore is made up of the ten-subunit KMN network complex, comprising the MIS12, NDC80 and KNL1 complexes, and auxiliary microtubule-associated components such as the SKA complex; together they connect the outer kinetochore with the inner kinetochore, bind microtubules, and mediate interactions with mitotic checkpoint proteins that delay anaphase until chromosomes are bioriented on the spindle. The SKA complex is loaded onto bioriented kinetochores and it facilitates chromosome congression by stabilizing microtubules together with MAPRE1, and end-on attachment of the NDC80 complex to depolymerizing spindle microtubules, thereby assisting the poleward-moving kinetochore in withstanding microtubule pulling forces. The complex associates with dynamic microtubule plus-ends and can track both depolymerizing and elongating microtubules. The complex recruits protein phosphatase 1 (PP1) to the kinetochore in prometaphase and metaphase, to oppose spindle assembly checkpoint signaling and promote the onset of anaphase. Binds directly to microtubules; but with a much lower affinity than SKA1. During meiosis the SKA complex stabilizes the meiotic spindle and is required for its migration to the cortex. This Salmo salar (Atlantic salmon) protein is SKA complex subunit 2 (ska2).